Reading from the N-terminus, the 193-residue chain is MPEPAKFAPAPKKGSKKAVTKAQKKDGKKRKRSRKESYSIYVYKVLKRVHPDTGIWCKAMGIMNSFLNDIFERIAGEASRLAHYNKRSTITSRRSRRPCACCCPASWPSTPCPRAPRRSPSTPAPSESLPGPGARSLPPSLPPRVAGCFVSKGSFQGHLTTSVKESFLCCQSQLMFLASRLVNFRRAHNTKHR.

Residues 1 to 12 (MPEPAKFAPAPK) show a composition bias toward low complexity. The disordered stretch occupies residues 1–33 (MPEPAKFAPAPKKGSKKAVTKAQKKDGKKRKRS). Pro-2 carries the N-acetylproline modification. An N6-(2-hydroxyisobutyryl)lysine; alternate modification is found at Lys-6. Residues Lys-6 and Lys-12 each carry the N6-(beta-hydroxybutyryl)lysine; alternate modification. N6-acetyllysine; alternate is present on residues Lys-6, Lys-12, and Lys-13. Lys-6 carries the post-translational modification N6-butyryllysine; alternate. N6-crotonyllysine; alternate occurs at positions 6, 12, and 13. 2 positions are modified to N6-lactoyllysine; alternate: Lys-6 and Lys-12. Residue Lys-6 forms a Glycyl lysine isopeptide (Lys-Gly) (interchain with G-Cter in SUMO2); alternate linkage. Lys-13 carries the post-translational modification N6-(2-hydroxyisobutyryl)lysine; alternate. Residue Ser-15 is modified to Phosphoserine; by STK4/MST1. N6-acetyllysine; alternate occurs at positions 16, 17, 21, and 24. N6-crotonyllysine; alternate is present on residues Lys-16, Lys-17, Lys-21, and Lys-24. Residues Lys-16, Lys-17, Lys-21, and Lys-24 each carry the N6-lactoyllysine; alternate modification. Residues Lys-17 and Lys-21 each carry the N6-(beta-hydroxybutyryl)lysine; alternate modification. Lys-17 carries the N6-glutaryllysine; alternate modification. Residues Lys-21 and Lys-24 each carry the N6-(2-hydroxyisobutyryl)lysine; alternate modification. Residue Lys-21 is modified to N6-butyryllysine; alternate. Residue Lys-21 forms a Glycyl lysine isopeptide (Lys-Gly) (interchain with G-Cter in SUMO2); alternate linkage. Lys-25 is modified (N6-(2-hydroxyisobutyryl)lysine). An N6-(2-hydroxyisobutyryl)lysine; alternate modification is found at Lys-35. Lys-35 carries the post-translational modification N6-(beta-hydroxybutyryl)lysine; alternate. At Lys-35 the chain carries N6-crotonyllysine; alternate. Lys-35 carries the post-translational modification N6-glutaryllysine; alternate. N6-succinyllysine; alternate is present on Lys-35. A Glycyl lysine isopeptide (Lys-Gly) (interchain with G-Cter in ubiquitin); alternate cross-link involves residue Lys-35. Position 37 is a phosphoserine; by AMPK (Ser-37). Lys-44, Lys-47, and Lys-58 each carry N6-(2-hydroxyisobutyryl)lysine; alternate. Lys-44 carries the N6-lactoyllysine; alternate modification. N6-glutaryllysine; alternate occurs at positions 44 and 47. An N6-methyllysine; alternate modification is found at Lys-47. Lys-58 is modified (N6,N6-dimethyllysine; alternate). Arg-80 is subject to Dimethylated arginine. Lys-86 bears the N6-(2-hydroxyisobutyryl)lysine; alternate mark. Lys-86 is modified (N6-(beta-hydroxybutyryl)lysine; alternate). Position 86 is an N6-acetyllysine; alternate (Lys-86). Lys-86 is modified (N6-lactoyllysine; alternate). Lys-86 carries the N6,N6,N6-trimethyllysine; alternate modification. Omega-N-methylarginine is present on residues Arg-87 and Arg-93. Residues 111–136 (PCPRAPRRSPSTPAPSESLPGPGARS) are disordered.

It belongs to the histone H2B family. As to quaternary structure, the nucleosome is a histone octamer containing two molecules each of H2A, H2B, H3 and H4 assembled in one H3-H4 heterotetramer and two H2A-H2B heterodimers. The octamer wraps approximately 147 bp of DNA. Post-translationally, phosphorylation at Ser-37 (H2BS36ph) by AMPK in response to stress promotes transcription. Phosphorylated on Ser-15 (H2BS14ph) by STK4/MST1 during apoptosis; which facilitates apoptotic chromatin condensation. Also phosphorylated on Ser-15 in response to DNA double strand breaks (DSBs), and in correlation with somatic hypermutation and immunoglobulin class-switch recombination. In terms of processing, crotonylation (Kcr) is specifically present in male germ cells and marks testis-specific genes in post-meiotic cells, including X-linked genes that escape sex chromosome inactivation in haploid cells. Crotonylation marks active promoters and enhancers and confers resistance to transcriptional repressors. It is also associated with post-meiotically activated genes on autosomes. Lactylated in macrophages by EP300/P300 by using lactoyl-CoA directly derived from endogenous or exogenous lactate, leading to stimulates gene transcription.

It is found in the nucleus. The protein localises to the chromosome. Functionally, core component of nucleosome. Nucleosomes wrap and compact DNA into chromatin, limiting DNA accessibility to the cellular machineries which require DNA as a template. Histones thereby play a central role in transcription regulation, DNA repair, DNA replication and chromosomal stability. DNA accessibility is regulated via a complex set of post-translational modifications of histones, also called histone code, and nucleosome remodeling. The chain is Putative histone H2B type 2-C from Homo sapiens (Human).